The sequence spans 442 residues: UPF0489 protein C5orf22 homolog (442 aa).

The tract at residues 175–208 (SSAKKPKLALEDSRNTASTNCDSSSEGLEKDTAT) is disordered. Residues 189–200 (NTASTNCDSSSE) are compositionally biased toward polar residues.

This sequence belongs to the UPF0489 family.

The chain is UPF0489 protein C5orf22 homolog from Pongo abelii (Sumatran orangutan).